Here is a 220-residue protein sequence, read N- to C-terminus: Large ribosomal subunit protein uL1 (220 aa).

Belongs to the universal ribosomal protein uL1 family. Part of the 50S ribosomal subunit.

In terms of biological role, binds directly to 23S rRNA. The L1 stalk is quite mobile in the ribosome, and is involved in E site tRNA release. Its function is as follows. Protein L1 is also a translational repressor protein, it controls the translation of the L11 operon by binding to its mRNA. The polypeptide is Large ribosomal subunit protein uL1 (Ehrlichia canis (strain Jake)).